A 159-amino-acid chain; its full sequence is Ribosomal RNA large subunit methyltransferase H (159 aa).

Residues leucine 76, glycine 108, and 127 to 132 (LSDMTF) each bind S-adenosyl-L-methionine.

This sequence belongs to the RNA methyltransferase RlmH family. In terms of assembly, homodimer.

It is found in the cytoplasm. It catalyses the reaction pseudouridine(1915) in 23S rRNA + S-adenosyl-L-methionine = N(3)-methylpseudouridine(1915) in 23S rRNA + S-adenosyl-L-homocysteine + H(+). In terms of biological role, specifically methylates the pseudouridine at position 1915 (m3Psi1915) in 23S rRNA. The protein is Ribosomal RNA large subunit methyltransferase H of Acetivibrio thermocellus (strain ATCC 27405 / DSM 1237 / JCM 9322 / NBRC 103400 / NCIMB 10682 / NRRL B-4536 / VPI 7372) (Clostridium thermocellum).